A 454-amino-acid polypeptide reads, in one-letter code: Tryptophanase (454 aa).

Lys-256 carries the N6-(pyridoxal phosphate)lysine modification.

It belongs to the beta-eliminating lyase family. In terms of assembly, homotetramer. It depends on pyridoxal 5'-phosphate as a cofactor.

It carries out the reaction L-tryptophan + H2O = indole + pyruvate + NH4(+). The protein operates within amino-acid degradation; L-tryptophan degradation via pyruvate pathway; indole and pyruvate from L-tryptophan: step 1/1. The chain is Tryptophanase (tnaA) from Rhodobacter capsulatus (Rhodopseudomonas capsulata).